Here is a 628-residue protein sequence, read N- to C-terminus: Probable alpha-L-arabinofuranosidase A (628 aa).

An N-terminal signal peptide occupies residues 1–25 (MVAFSTISGLGALSLLFSIIESVDG). N-linked (GlcNAc...) asparagine glycosylation is found at Asn36, Asn51, Asn74, Asn152, Asn164, Asn260, Asn359, Asn404, and Asn493.

Belongs to the glycosyl hydrolase 51 family.

The protein resides in the secreted. The catalysed reaction is Hydrolysis of terminal non-reducing alpha-L-arabinofuranoside residues in alpha-L-arabinosides.. It participates in glycan metabolism; L-arabinan degradation. Its function is as follows. Alpha-L-arabinofuranosidase involved in the degradation of arabinoxylan, a major component of plant hemicellulose. Acts only on small linear 1,5-alpha-linked L-arabinofuranosyl oligosaccharides. The polypeptide is Probable alpha-L-arabinofuranosidase A (abfA) (Aspergillus terreus (strain NIH 2624 / FGSC A1156)).